We begin with the raw amino-acid sequence, 145 residues long: MYPAHLLVLLAVCVSLLGASAILPLPLNLVQFTYLIQCANKGSRASYHYADYGCYCGAGGSGTPVDELDRCCKIHDDCYGEAEKMGCYPKLTMYNYYCGTEGPYCSTKTDCQRYVCACDLQAAKCFARSPYNNKNYNIDTSKRCK.

An N-terminal signal peptide occupies residues 1 to 21 (MYPAHLLVLLAVCVSLLGASA). A propeptide spanning residues 22–27 (ILPLPL) is cleaved from the precursor. Cystine bridges form between Cys-38–Cys-98, Cys-54–Cys-144, Cys-56–Cys-72, Cys-71–Cys-125, Cys-78–Cys-118, Cys-87–Cys-111, and Cys-105–Cys-116. Residues Tyr-55, Gly-57, and Gly-59 each contribute to the Ca(2+) site. His-75 is an active-site residue. A Ca(2+)-binding site is contributed by Asp-76. Residue Asp-119 is part of the active site.

This sequence belongs to the phospholipase A2 family. Group I subfamily. D49 sub-subfamily. It depends on Ca(2+) as a cofactor. In terms of tissue distribution, expressed by the venom gland.

It localises to the secreted. The enzyme catalyses a 1,2-diacyl-sn-glycero-3-phosphocholine + H2O = a 1-acyl-sn-glycero-3-phosphocholine + a fatty acid + H(+). Its function is as follows. PLA2 catalyzes the calcium-dependent hydrolysis of the 2-acyl groups in 3-sn-phosphoglycerides. In Laticauda semifasciata (Black-banded sea krait), this protein is Basic phospholipase A2 cL037.